A 361-amino-acid chain; its full sequence is Solute carrier family 25 member 3 (361 aa).

Residues 1-49 (MFSSVAHLARANPFNTPHLQLVHDGLGDFRSRPPGPTGQPRRPRNLAAA) constitute a mitochondrion transit peptide. The segment at 25 to 44 (GLGDFRSRPPGPTGQPRRPR) is disordered. At 50 to 62 (AVEEYSCEFGSAK) the chain is on the mitochondrial intermembrane side. Solcar repeat units follow at residues 62-146 (KYYA…FKVL), 159-243 (WRTS…TVEA), and 260-338 (EQLV…VKVY). Residues 63 to 85 (YYALCGFGGVLSCGLTHTAVVPL) traverse the membrane as a helical segment. Over 86 to 120 (DLVKCRMQVDPQKYKGIFNGFSVTLKEDGVRGLAK) the chain is Mitochondrial matrix. Lysine 98 is modified (N6-acetyllysine). Lysine 111 bears the N6-methyllysine mark. Residues 121 to 140 (GWAPTFLGYSMQGLCKFGFY) form a helical membrane-spanning segment. Residues 141–160 (EVFKVLYSNMLGEENTYLWR) lie on the Mitochondrial intermembrane side of the membrane. The helical transmembrane segment at 161–182 (TSLYLAASASAEFFADIALAPM) threads the bilayer. Residues 183–217 (EAAKVRIQTQPGYANTLRDAAPKMYKEEGLKAFYK) lie on the Mitochondrial matrix side of the membrane. Residue tyrosine 195 is modified to Phosphotyrosine. Position 208 is an N6-acetyllysine (lysine 208). The chain crosses the membrane as a helical span at residues 218–237 (GVAPLWMRQIPYTMMKFACF). The Mitochondrial intermembrane segment spans residues 238-260 (ERTVEALYKFVVPKPRSECSKPE). The helical transmembrane segment at 261–283 (QLVVTFVAGYIAGVFCAIVSHPA) threads the bilayer. At 284-313 (DSVVSVLNKEKGSSASLVLKRLGFKGVWKG) the chain is on the mitochondrial matrix side. Residues 314–332 (LFARIIMIGTLTALQWFIY) form a helical membrane-spanning segment. Topologically, residues 333–361 (DSVKVYFRLPRPPPPEMPESLKKKLGLTQ) are mitochondrial intermembrane.

This sequence belongs to the mitochondrial carrier (TC 2.A.29) family. Interacts with PPIF; the interaction is impaired by CsA.

It is found in the mitochondrion inner membrane. The enzyme catalyses phosphate(in) + H(+)(in) = phosphate(out) + H(+)(out). Its function is as follows. Inorganic ion transporter that transports phosphate or copper ions across the mitochondrial inner membrane into the matrix compartment. Mediates proton-coupled symport of phosphate ions necessary for mitochondrial oxidative phosphorylation of ADP to ATP. Transports copper ions probably in the form of anionic copper(I) complexes to maintain mitochondrial matrix copper pool and to supply copper for cytochrome C oxidase complex assembly. May also play a role in regulation of the mitochondrial permeability transition pore (mPTP). This is Solute carrier family 25 member 3 from Pongo abelii (Sumatran orangutan).